The primary structure comprises 338 residues: RNA 3'-terminal phosphate cyclase (338 aa).

Residues glutamine 103 and 283–287 (YLADQ) each bind ATP. Histidine 308 functions as the Tele-AMP-histidine intermediate in the catalytic mechanism.

The protein belongs to the RNA 3'-terminal cyclase family. Type 1 subfamily.

It localises to the cytoplasm. It carries out the reaction a 3'-end 3'-phospho-ribonucleotide-RNA + ATP = a 3'-end 2',3'-cyclophospho-ribonucleotide-RNA + AMP + diphosphate. Functionally, catalyzes the conversion of 3'-phosphate to a 2',3'-cyclic phosphodiester at the end of RNA. The mechanism of action of the enzyme occurs in 3 steps: (A) adenylation of the enzyme by ATP; (B) transfer of adenylate to an RNA-N3'P to produce RNA-N3'PP5'A; (C) and attack of the adjacent 2'-hydroxyl on the 3'-phosphorus in the diester linkage to produce the cyclic end product. The biological role of this enzyme is unknown but it is likely to function in some aspects of cellular RNA processing. In Escherichia coli O17:K52:H18 (strain UMN026 / ExPEC), this protein is RNA 3'-terminal phosphate cyclase.